The primary structure comprises 37 residues: Cytochrome b6-f complex subunit 5 (37 aa).

Residues 5–25 (ILLGIVLGMVLVTLAGLFVAA) traverse the membrane as a helical segment.

Belongs to the PetG family. The 4 large subunits of the cytochrome b6-f complex are cytochrome b6, subunit IV (17 kDa polypeptide, PetD), cytochrome f and the Rieske protein, while the 4 small subunits are PetG, PetL, PetM and PetN. The complex functions as a dimer.

It localises to the cellular thylakoid membrane. In terms of biological role, component of the cytochrome b6-f complex, which mediates electron transfer between photosystem II (PSII) and photosystem I (PSI), cyclic electron flow around PSI, and state transitions. PetG is required for either the stability or assembly of the cytochrome b6-f complex. The chain is Cytochrome b6-f complex subunit 5 from Synechococcus sp. (strain JA-3-3Ab) (Cyanobacteria bacterium Yellowstone A-Prime).